Consider the following 133-residue polypeptide: Protein FwdD (133 aa).

The protein is Protein FwdD (fwdD) of Methanocaldococcus jannaschii (strain ATCC 43067 / DSM 2661 / JAL-1 / JCM 10045 / NBRC 100440) (Methanococcus jannaschii).